Reading from the N-terminus, the 347-residue chain is Sesquiterpene synthase M422DRAFT_47084 (347 aa).

Positions 93, 228, 232, and 236 each coordinate Mg(2+). Positions 93–97 match the DDXXD motif motif; sequence DEYTD. Positions 318 and 319 each coordinate (2E,6E)-farnesyl diphosphate.

It belongs to the terpene synthase family. Mg(2+) serves as cofactor.

It catalyses the reaction (2E,6E)-farnesyl diphosphate = viridiflorene + diphosphate. In terms of biological role, terpene cyclase that catalyzes the cyclization of farnesyl diphosphate (FPP) to viridiflorene and viridiflorol. The chain is Sesquiterpene synthase M422DRAFT_47084 from Sphaerobolus stellatus (strain SS14).